A 384-amino-acid polypeptide reads, in one-letter code: Dimethyladenosine transferase (384 aa).

Positions 1–24 (MPKTAKNKRNNAASGPYDKKSKGS) are disordered. Residues H39, L41, G66, E87, D115, and N131 each coordinate S-adenosyl-L-methionine. A disordered region spans residues 289-309 (MDANSDTDNDNDGDAMEEDDD).

This sequence belongs to the class I-like SAM-binding methyltransferase superfamily. rRNA adenine N(6)-methyltransferase family.

The protein resides in the cytoplasm. The protein localises to the nucleus. It localises to the nucleolus. It carries out the reaction adenosine(1779)/adenosine(1780) in 18S rRNA + 4 S-adenosyl-L-methionine = N(6)-dimethyladenosine(1779)/N(6)-dimethyladenosine(1780) in 18S rRNA + 4 S-adenosyl-L-homocysteine + 4 H(+). In terms of biological role, specifically dimethylates two adjacent adenosines in the loop of a conserved hairpin near the 3'-end of 18S rRNA in the 40S particle. In Chaetomium thermophilum (strain DSM 1495 / CBS 144.50 / IMI 039719) (Thermochaetoides thermophila), this protein is Dimethyladenosine transferase (DIM1).